Reading from the N-terminus, the 113-residue chain is Outer membrane protein assembly factor BamE (113 aa).

The N-terminal stretch at 1–19 is a signal peptide; sequence MRCKTLTAAAAVLLMLTAG. Cysteine 20 carries the N-palmitoyl cysteine lipid modification. Cysteine 20 carries S-diacylglycerol cysteine lipidation.

The protein belongs to the BamE family. In terms of assembly, part of the Bam complex, which is composed of the outer membrane protein BamA, and four lipoproteins BamB, BamC, BamD and BamE.

It is found in the cell outer membrane. Its function is as follows. Part of the outer membrane protein assembly complex, which is involved in assembly and insertion of beta-barrel proteins into the outer membrane. In Escherichia coli O6:H1 (strain CFT073 / ATCC 700928 / UPEC), this protein is Outer membrane protein assembly factor BamE.